Reading from the N-terminus, the 585-residue chain is ATP-dependent lipid A-core flippase (585 aa).

A run of 6 helical transmembrane segments spans residues 18-38, 68-88, 142-162, 163-183, 255-275, and 277-297; these read LWPTIAPFKIGLIAAAAALVL, LMAVLVIVFIFIRGITSFISS, SNALVTIVREGAYIISLLAVM, IATSWQLSVVLFIIGPVIAVL, PIVQIIASLALSAVLYLATIP, and IMSQNLSAGSFTVVFSSMLAM. One can recognise an ABC transmembrane type-1 domain in the interval 30–313; that stretch reads IAAAAALVLN…LTNVNSQFQR (284 aa). One can recognise an ABC transporter domain in the interval 345-581; it reads VSFKDVSFTY…NGAYKQLHKM (237 aa). Residue 379–386 coordinates ATP; sequence GRSGSGKS.

The protein belongs to the ABC transporter superfamily. Lipid exporter (TC 3.A.1.106) family. As to quaternary structure, homodimer.

It localises to the cell inner membrane. The catalysed reaction is ATP + H2O + lipid A-core oligosaccharideSide 1 = ADP + phosphate + lipid A-core oligosaccharideSide 2.. Functionally, involved in lipopolysaccharide (LPS) biosynthesis. Translocates lipid A-core from the inner to the outer leaflet of the inner membrane. Transmembrane domains (TMD) form a pore in the inner membrane and the ATP-binding domain (NBD) is responsible for energy generation. The protein is ATP-dependent lipid A-core flippase of Mannheimia succiniciproducens (strain KCTC 0769BP / MBEL55E).